Consider the following 207-residue polypeptide: Ras-related protein RABH1d (207 aa).

GTP is bound at residue 16–23 (GDQSVGKT). Positions 38-46 (YQATIGIDF) match the Effector region motif. GTP-binding positions include 64–68 (DTAGQ), 122–125 (NKTD), and 152–153 (SA). S-geranylgeranyl cysteine attachment occurs at residues Cys205 and Cys207. Cys207 bears the Cysteine methyl ester mark.

The protein belongs to the small GTPase superfamily. Rab family.

The protein localises to the golgi apparatus membrane. Functionally, protein transport. Regulator of membrane traffic from the Golgi apparatus towards the endoplasmic reticulum (ER). This chain is Ras-related protein RABH1d (RABH1D), found in Arabidopsis thaliana (Mouse-ear cress).